Reading from the N-terminus, the 139-residue chain is Protein archease (139 aa).

3 residues coordinate Ca(2+): Asp-12, Asp-138, and Ile-139.

This sequence belongs to the archease family.

Activates the tRNA-splicing ligase complex by facilitating the enzymatic turnover of catalytic subunit RtcB. Acts by promoting the guanylylation of RtcB, a key intermediate step in tRNA ligation. Can also alter the NTP specificity of RtcB such that ATP, dGTP or ITP is used efficiently. The polypeptide is Protein archease (Saccharolobus solfataricus (strain ATCC 35092 / DSM 1617 / JCM 11322 / P2) (Sulfolobus solfataricus)).